Reading from the N-terminus, the 107-residue chain is Cytochrome c2 (107 aa).

A Pyrrolidone carboxylic acid modification is found at Q1. Residues C13, C16, H17, and M79 each coordinate heme c.

It belongs to the cytochrome c family. Post-translationally, binds 1 heme c group covalently per subunit.

The protein resides in the periplasm. Functionally, cytochrome c2 is found mainly in purple, non-sulfur, photosynthetic bacteria where it functions as the electron donor to the oxidized bacteriochlorophyll in the photophosphorylation pathway. However, it may also have a role in the respiratory chain and is found in some non-photosynthetic bacteria. In Rhodoplanes tepidamans (Rhodoplanes cryptolactis), this protein is Cytochrome c2.